The sequence spans 1417 residues: DNA-directed RNA polymerase subunit beta' (1417 aa).

Residues C68, C70, C83, and C86 each contribute to the Zn(2+) site. D458, D460, and D462 together coordinate Mg(2+). Positions 811, 884, 891, and 894 each coordinate Zn(2+).

Belongs to the RNA polymerase beta' chain family. The RNAP catalytic core consists of 2 alpha, 1 beta, 1 beta' and 1 omega subunit. When a sigma factor is associated with the core the holoenzyme is formed, which can initiate transcription. It depends on Mg(2+) as a cofactor. The cofactor is Zn(2+).

It carries out the reaction RNA(n) + a ribonucleoside 5'-triphosphate = RNA(n+1) + diphosphate. In terms of biological role, DNA-dependent RNA polymerase catalyzes the transcription of DNA into RNA using the four ribonucleoside triphosphates as substrates. The protein is DNA-directed RNA polymerase subunit beta' of Francisella tularensis subsp. holarctica (strain OSU18).